Reading from the N-terminus, the 874-residue chain is MKTSELRQKFLKFFETKGHTVVRSSSLVPHDDPTLLFTNAGMNQFKDVFLGFDKRPYSRATTAQKCVRAGGKHNDLENVGYTARHHTFFEMMGNFSFGDYFKRDAIHFAWEFLTSPEWLNIPKDKLLATVYAEDDEAYNIWLNEIGMPSERIVRIGDNKGAKYVSDNFWQMGDTGPCGPCSEIFYDHGEEIWGGIPGSPEEDGDRWIEIWNCVFMQFNRDEQGNMNPLPKPSVDTGMGLERMAAVMQHVHSNYEIDLFQDLLKAVARETGAAFSMDEPSLKVIADHIRSCSFLIADGVLPSNEGRGYVLRRIIRRAVRHGYKLGQSKPFFHKLVADLVKEMGGAYPELKEKQAQIEEALKNEESRFAQTLETGMALLENALAKGGKTLDGEIIFKLYDTYGFPYDLTADICRERNIELDEAGFEREMEAQRARARAAQSFKANAQLPYDGQDTEFKGYSERQTESKVLALYKDGEQVNELNEGDSGAVVIDFTPFYAESGGQVGDVGYIFSSENRFEVRDTQKIKAAVFGQFGVQTSGRLKVGDSVTAKVDDEIRNANMRNHSATHLMHKALRDVLGGHVEQKGSLVTAESTRFDISHPQAVTAEEIAEVERRVNEAVLANVAVNAAIMSMEDAQKTGAMMLFGEKYGEEVRVLQMGGFSTELCGGTHVSRTGDIGLFKIISEGGIAAGVRRIEAITGLNALKWAQEQERLVKDIIAETKAQTEKDVLAKIQAGAAHAKALEKELAKAKAELAVHAGAKLLDDAKDLGAAKLVAAQIEADAAALREIVTDLTGKSDNAVILLAAVNDGKVSLCAGVSKPLTGKVKAGDLVKFAAEQVGGKGGGRPDLAQAGGTDAGKLPEMLVSVESWLCQKLS.

4 residues coordinate Zn(2+): histidine 562, histidine 566, cysteine 664, and histidine 668.

This sequence belongs to the class-II aminoacyl-tRNA synthetase family. Zn(2+) is required as a cofactor.

It is found in the cytoplasm. The catalysed reaction is tRNA(Ala) + L-alanine + ATP = L-alanyl-tRNA(Ala) + AMP + diphosphate. Catalyzes the attachment of alanine to tRNA(Ala) in a two-step reaction: alanine is first activated by ATP to form Ala-AMP and then transferred to the acceptor end of tRNA(Ala). Also edits incorrectly charged Ser-tRNA(Ala) and Gly-tRNA(Ala) via its editing domain. The polypeptide is Alanine--tRNA ligase (Neisseria meningitidis serogroup C (strain 053442)).